We begin with the raw amino-acid sequence, 546 residues long: Chaperonin GroEL (546 aa).

ATP contacts are provided by residues 29 to 32, Lys50, 86 to 90, Gly414, 477 to 479, and Asp493; these read TLGP, DGTTT, and NAL. Positions 522–546 are disordered; that stretch reads KPEKDAPNPMAGMGGGGMGGMGGMM. A compositionally biased stretch (gly residues) spans 533-546; it reads GMGGGGMGGMGGMM.

Belongs to the chaperonin (HSP60) family. In terms of assembly, forms a cylinder of 14 subunits composed of two heptameric rings stacked back-to-back. Interacts with the co-chaperonin GroES.

Its subcellular location is the cytoplasm. It carries out the reaction ATP + H2O + a folded polypeptide = ADP + phosphate + an unfolded polypeptide.. Functionally, together with its co-chaperonin GroES, plays an essential role in assisting protein folding. The GroEL-GroES system forms a nano-cage that allows encapsulation of the non-native substrate proteins and provides a physical environment optimized to promote and accelerate protein folding. This is Chaperonin GroEL from Leptospira borgpetersenii serovar Hardjo-bovis (strain JB197).